The following is a 314-amino-acid chain: uncharacterized protein (314 aa).

10 helical membrane-spanning segments follow: residues 4–23 (FFIGDLLPIIVIMLLGYFSG), 36–53 (FNKLVLNYALPAALFVSI), 68–90 (TLVSLVVIVGCFFFSWFGCYKFF), 97–116 (AAVCALIAGSPTIGFLGFAV), 131–153 (VAIISIIVNAITIPIGLYLLNPS), 174–196 (PVVWAPVLATILVLVGVKIPAAW), 200–222 (FNLIAKANSGVAVFAAGLTLAAH), 229–251 (EIAYNTFLKLILMPLALLLVGMA), 261–283 (MMVLAGALPPAFSGIIIASRFNV), and 290–309 (ASLAVSVLGFVVTAPLWIYV).

The protein belongs to the auxin efflux carrier (TC 2.A.69) family.

It is found in the cell membrane. This is an uncharacterized protein from Escherichia coli O157:H7.